The chain runs to 415 residues: Beta-1,4-glucuronyltransferase 1 (415 aa).

Topologically, residues 1 to 8 (MQMSYAIR) are cytoplasmic. Residues 9–36 (CAFYQLLLAALMLVAMLQLLYLSLLSGL) form a helical; Signal-anchor for type II membrane protein membrane-spanning segment. At 37 to 415 (HGQEEQDQYF…AKYPNSPRRC (379 aa)) the chain is on the lumenal side. N-linked (GlcNAc...) asparagine glycosylation is present at Asn204. Mn(2+)-binding residues include Asp227 and Asp229. N-linked (GlcNAc...) asparagine glycosylation is present at Asn300.

Belongs to the glycosyltransferase 49 family. Interacts with LARGE1 and LARGE2. Mn(2+) is required as a cofactor. In terms of tissue distribution, in the adult, highly expressed in heart, brain, skeletal muscle and kidney and to a lesser extent in placenta, pancreas, spleen, prostate, testis, ovary, small intestine and colon. Very weak expression in lung, liver, thymus and peripheral blood leukocytes. In fetal highly expressed in brain and kidney and to a lesser extent in lung and liver.

The protein localises to the golgi apparatus membrane. It carries out the reaction 3-O-[beta-D-Xyl-(1-&gt;4)-Rib-ol-P-Rib-ol-P-3-beta-D-GalNAc-(1-&gt;3)-beta-D-GlcNAc-(1-&gt;4)-(O-6-P-alpha-D-Man)]-Thr-[protein] + UDP-alpha-D-glucuronate = 3-O-[beta-D-GlcA-(1-&gt;3)-beta-D-Xyl-(1-&gt;4)-Rib-ol-P-Rib-ol-P-3-beta-D-GalNAc-(1-&gt;3)-beta-D-GlcNAc-(1-&gt;4)-(O-6-P-alpha-D-Man)]-Thr-[protein] + UDP + H(+). It participates in protein modification; protein glycosylation. Its function is as follows. Beta-1,4-glucuronyltransferase involved in O-mannosylation of alpha-dystroglycan (DAG1). Transfers a glucuronic acid (GlcA) residue onto a xylose (Xyl) acceptor to produce the glucuronyl-beta-1,4-xylose-beta disaccharide primer, which is further elongated by LARGE1, during synthesis of phosphorylated O-mannosyl glycan. Phosphorylated O-mannosyl glycan is a carbohydrate structure present in alpha-dystroglycan (DAG1), which is required for binding laminin G-like domain-containing extracellular proteins with high affinity. Required for axon guidance; via its function in O-mannosylation of alpha-dystroglycan (DAG1). This is Beta-1,4-glucuronyltransferase 1 from Homo sapiens (Human).